The sequence spans 37 residues: Cytochrome bd-I ubiquinol oxidase subunit X (37 aa).

Residues F4–L24 form a helical membrane-spanning segment.

It belongs to the cytochrome ubiquinol oxidase subunit X family. May be a subunit of cytochrome bd-I ubiquinol oxidase. Probably interacts with CydA and CydB.

Its subcellular location is the cell inner membrane. It carries out the reaction 2 a ubiquinol + O2(in) + 4 H(+)(in) = 2 a ubiquinone + 2 H2O(in) + 4 H(+)(out). The protein operates within energy metabolism; oxidative phosphorylation. In terms of biological role, required for correct functioning of cytochrome bd-I oxidase. This protein and AppX may have some functional overlap. In Escherichia coli (strain K12), this protein is Cytochrome bd-I ubiquinol oxidase subunit X (cydX).